The primary structure comprises 567 residues: Urease subunit alpha (567 aa).

Positions 129 to 567 (GGIDAHIHFI…LPLAQRYFLF (439 aa)) constitute a Urease domain. Ni(2+) is bound by residues His134, His136, and Lys217. An N6-carboxylysine modification is found at Lys217. His219 lines the substrate pocket. The Ni(2+) site is built by His246 and His272. The active-site Proton donor is the His320. Residue Asp360 participates in Ni(2+) binding.

The protein belongs to the metallo-dependent hydrolases superfamily. Urease alpha subunit family. Heterotrimer of UreA (gamma), UreB (beta) and UreC (alpha) subunits. Three heterotrimers associate to form the active enzyme. Ni cation is required as a cofactor. Carboxylation allows a single lysine to coordinate two nickel ions.

Its subcellular location is the cytoplasm. It carries out the reaction urea + 2 H2O + H(+) = hydrogencarbonate + 2 NH4(+). The protein operates within nitrogen metabolism; urea degradation; CO(2) and NH(3) from urea (urease route): step 1/1. In Hahella chejuensis (strain KCTC 2396), this protein is Urease subunit alpha.